The primary structure comprises 162 residues: 2-C-methyl-D-erythritol 2,4-cyclodiphosphate synthase (162 aa).

Positions 10 and 12 each coordinate a divalent metal cation. Residues 10-12 (DVH) and 36-37 (HS) contribute to the 4-CDP-2-C-methyl-D-erythritol 2-phosphate site. His-44 provides a ligand contact to a divalent metal cation. 4-CDP-2-C-methyl-D-erythritol 2-phosphate contacts are provided by residues 58 to 60 (DIG), 63 to 67 (FPDTD), 102 to 108 (AQAPKMA), 134 to 137 (TTTE), Phe-141, and Arg-144.

The protein belongs to the IspF family. As to quaternary structure, homotrimer. A divalent metal cation is required as a cofactor.

The catalysed reaction is 4-CDP-2-C-methyl-D-erythritol 2-phosphate = 2-C-methyl-D-erythritol 2,4-cyclic diphosphate + CMP. Its pathway is isoprenoid biosynthesis; isopentenyl diphosphate biosynthesis via DXP pathway; isopentenyl diphosphate from 1-deoxy-D-xylulose 5-phosphate: step 4/6. Functionally, involved in the biosynthesis of isopentenyl diphosphate (IPP) and dimethylallyl diphosphate (DMAPP), two major building blocks of isoprenoid compounds. Catalyzes the conversion of 4-diphosphocytidyl-2-C-methyl-D-erythritol 2-phosphate (CDP-ME2P) to 2-C-methyl-D-erythritol 2,4-cyclodiphosphate (ME-CPP) with a corresponding release of cytidine 5-monophosphate (CMP). The polypeptide is 2-C-methyl-D-erythritol 2,4-cyclodiphosphate synthase (Pseudoalteromonas atlantica (strain T6c / ATCC BAA-1087)).